We begin with the raw amino-acid sequence, 742 residues long: NAD(P)H-quinone oxidoreductase subunit 5, chloroplastic (742 aa).

16 consecutive transmembrane segments (helical) span residues 9–29, 40–60, 89–109, 125–145, 147–167, 185–205, 219–239, 258–278, 283–303, 327–347, 354–374, 396–416, 425–445, 550–570, 606–626, and 722–742; these read WIIP…LLLF, WSFQ…NLSI, IDPL…MVLI, FAYM…SNLI, IYIF…FWFT, GDFG…SFEF, NEVN…GAIA, TPIS…FLVA, LFIV…ITVF, LGYM…FHLI, ALLF…VGYC, NSFL…CFWS, WLYS…TAFY, LFPI…GIPF, FFSV…YKPV, and YLFF…FFNV.

This sequence belongs to the complex I subunit 5 family. As to quaternary structure, NDH is composed of at least 16 different subunits, 5 of which are encoded in the nucleus.

It localises to the plastid. The protein localises to the chloroplast thylakoid membrane. The catalysed reaction is a plastoquinone + NADH + (n+1) H(+)(in) = a plastoquinol + NAD(+) + n H(+)(out). It carries out the reaction a plastoquinone + NADPH + (n+1) H(+)(in) = a plastoquinol + NADP(+) + n H(+)(out). Functionally, NDH shuttles electrons from NAD(P)H:plastoquinone, via FMN and iron-sulfur (Fe-S) centers, to quinones in the photosynthetic chain and possibly in a chloroplast respiratory chain. The immediate electron acceptor for the enzyme in this species is believed to be plastoquinone. Couples the redox reaction to proton translocation, and thus conserves the redox energy in a proton gradient. This Lactuca sativa (Garden lettuce) protein is NAD(P)H-quinone oxidoreductase subunit 5, chloroplastic (ndhF).